A 279-amino-acid chain; its full sequence is Oxygen-dependent coproporphyrinogen-III oxidase (279 aa).

S102 serves as a coordination point for substrate. Residues H106 and H116 each coordinate a divalent metal cation. H116 serves as the catalytic Proton donor. Substrate is bound at residue 118 to 120; it reads NTR. The a divalent metal cation site is built by H149 and H179. The segment at 244–279 is important for dimerization; the sequence is YVEFNLLYDRGTKFGLMTDGNVEAILMSLPPEVKWA.

Belongs to the aerobic coproporphyrinogen-III oxidase family. Homodimer. A divalent metal cation is required as a cofactor.

Its subcellular location is the cytoplasm. The enzyme catalyses coproporphyrinogen III + O2 + 2 H(+) = protoporphyrinogen IX + 2 CO2 + 2 H2O. It functions in the pathway porphyrin-containing compound metabolism; protoporphyrin-IX biosynthesis; protoporphyrinogen-IX from coproporphyrinogen-III (O2 route): step 1/1. Functionally, involved in the heme biosynthesis. Catalyzes the aerobic oxidative decarboxylation of propionate groups of rings A and B of coproporphyrinogen-III to yield the vinyl groups in protoporphyrinogen-IX. In Rickettsia bellii (strain OSU 85-389), this protein is Oxygen-dependent coproporphyrinogen-III oxidase.